We begin with the raw amino-acid sequence, 291 residues long: Nucleotide-binding protein RALTA_A0325 (291 aa).

Residue 8 to 15 (GISGSGKS) participates in ATP binding. 57–60 (DIRS) lines the GTP pocket.

This sequence belongs to the RapZ-like family.

Its function is as follows. Displays ATPase and GTPase activities. This Cupriavidus taiwanensis (strain DSM 17343 / BCRC 17206 / CCUG 44338 / CIP 107171 / LMG 19424 / R1) (Ralstonia taiwanensis (strain LMG 19424)) protein is Nucleotide-binding protein RALTA_A0325.